Here is a 114-residue protein sequence, read N- to C-terminus: Lymphotactin (114 aa).

Residues 1–21 (MRLLLLTFLGVCCFAAWVVEG) form the signal peptide. The cysteines at positions 32 and 69 are disulfide-linked. Residues 87 to 114 (RASASKSKAETIPTQAQRSASTAVTLTG) are disordered. A compositionally biased stretch (polar residues) spans 98-114 (IPTQAQRSASTAVTLTG).

Belongs to the intercrine gamma family.

It is found in the secreted. Its function is as follows. Chemotactic activity for lymphocytes but not for monocytes or neutrophils. In thymus, mediates medullary accumulation of thymic dendritic cells and contributes to regulatoy T cell development, playing a role in self-tolerance establishment. The polypeptide is Lymphotactin (Xcl1) (Rattus norvegicus (Rat)).